Reading from the N-terminus, the 517-residue chain is Putative ribose/galactose/methyl galactoside import ATP-binding protein 1 (517 aa).

ABC transporter domains follow at residues 23–258 (LQLQ…VGRP) and 269–515 (TPTD…SGRS). 55–62 (GENGAGKS) is an ATP binding site.

Belongs to the ABC transporter superfamily. Carbohydrate importer 2 (CUT2) (TC 3.A.1.2) family.

The protein resides in the cell inner membrane. It carries out the reaction D-ribose(out) + ATP + H2O = D-ribose(in) + ADP + phosphate + H(+). The enzyme catalyses D-galactose(out) + ATP + H2O = D-galactose(in) + ADP + phosphate + H(+). Its function is as follows. Part of an ABC transporter complex involved in carbohydrate import. Could be involved in ribose, galactose and/or methyl galactoside import. Responsible for energy coupling to the transport system. The sequence is that of Putative ribose/galactose/methyl galactoside import ATP-binding protein 1 from Burkholderia ambifaria (strain ATCC BAA-244 / DSM 16087 / CCUG 44356 / LMG 19182 / AMMD) (Burkholderia cepacia (strain AMMD)).